The following is a 237-amino-acid chain: Dihydroceramide fatty acyl 2-hydroxylase FAH1 (237 aa).

2 helical membrane passes run 50 to 70 (LTLTVWWAVPVIWLPVVVWCI) and 80 to 100 (LPEIVPIVVMGIFIWTFFEYV). Zn(2+) contacts are provided by histidine 102, histidine 107, histidine 123, histidine 126, and histidine 127. 2 helical membrane passes run 137–157 (VFPPTATAILCFPFWNIAKAI) and 164–184 (PALFGGGMLGYVMYDVTHYYL). Zn(2+) contacts are provided by histidine 181, histidine 185, histidine 201, histidine 204, and histidine 205.

It belongs to the sterol desaturase family. In terms of assembly, interacts with CYTB5-A, CYTB5-B, CYTB5-C and CYTB5-D. Interacts indirectly with BI-1 via CYTB5-D. It depends on Zn(2+) as a cofactor. In terms of tissue distribution, expressed in leaves, roots, flowers and seeds.

It is found in the endoplasmic reticulum membrane. It catalyses the reaction an N-(1,2-saturated acyl)sphinganine + 2 Fe(II)-[cytochrome b5] + O2 + 2 H(+) = an N-[(2'R)-hydroxyacyl]sphinganine + 2 Fe(III)-[cytochrome b5] + H2O. Its function is as follows. Fatty acid 2-hydroxylase involved in the alpha-hydroxylation of sphingolipid-associated very long-chain fatty acids (VLCFA). Probably involved in the resistance response to oxidative stress. This Arabidopsis thaliana (Mouse-ear cress) protein is Dihydroceramide fatty acyl 2-hydroxylase FAH1.